We begin with the raw amino-acid sequence, 390 residues long: Chorismate synthase (390 aa).

Residues R39 and R45 each contribute to the NADP(+) site. FMN contacts are provided by residues 132–134 (RSS), 253–254 (NA), G298, 313–317 (KPIPT), and R339.

It belongs to the chorismate synthase family. As to quaternary structure, homotetramer. It depends on FMNH2 as a cofactor.

The catalysed reaction is 5-O-(1-carboxyvinyl)-3-phosphoshikimate = chorismate + phosphate. The protein operates within metabolic intermediate biosynthesis; chorismate biosynthesis; chorismate from D-erythrose 4-phosphate and phosphoenolpyruvate: step 7/7. Its function is as follows. Catalyzes the anti-1,4-elimination of the C-3 phosphate and the C-6 proR hydrogen from 5-enolpyruvylshikimate-3-phosphate (EPSP) to yield chorismate, which is the branch point compound that serves as the starting substrate for the three terminal pathways of aromatic amino acid biosynthesis. This reaction introduces a second double bond into the aromatic ring system. The chain is Chorismate synthase from Bacillus cytotoxicus (strain DSM 22905 / CIP 110041 / 391-98 / NVH 391-98).